We begin with the raw amino-acid sequence, 945 residues long: Collagen-like protein 1 (945 aa).

Disordered regions lie at residues 80–226 and 257–441; these read SLKG…SPDL and GEKG…DKGE. Collagen-like domains lie at 83–142 and 146–205; these read GDPG…QGDK and GDVG…KGDK. Basic and acidic residues-rich tracts occupy residues 109-145 and 168-208; these read QGTK…KGDQ and DQGD…KGDK. N-linked (GlcNAc...) asparagine; by host glycosylation occurs at Asn211. 5 Collagen-like domains span residues 257-376, 383-442, 488-547, 554-613, and 635-694; these read GEKG…KGDK, GDKG…KGEN, GEKG…VGDK, GDKG…KGDV, and GDKG…VGAS. An N-linked (GlcNAc...) asparagine; by host glycan is attached at Asn442. A compositionally biased stretch (basic and acidic residues) spans 488-687; it reads GEKGDKGDTG…DKGDKGDKGD (200 aa). Residues 488 to 712 form a disordered region; that stretch reads GEKGDKGDTG…SPTTGENGDS (225 aa). The segment covering 703–712 has biased composition (polar residues); sequence SPTTGENGDS. Residue Asn716 is glycosylated (N-linked (GlcNAc...) asparagine; by host). A disordered region spans residues 733 to 768; the sequence is TNIKGDKGDKGDKGDKGDKGDTGDVGLKGDTGTPGS. The segment covering 736–754 has biased composition (basic and acidic residues); that stretch reads KGDKGDKGDKGDKGDKGDT. The segment covering 756 to 765 has biased composition (low complexity); it reads DVGLKGDTGT.

May be hydroxylated on lysine by the viral-encoded procollagen-lysine,2-oxoglutarate 5-dioxygenase.

Its subcellular location is the virion. Functionally, may participate in the formation of a layer of cross-linked glycosylated fibrils at the viral surface thus giving it a hairy-like appearance. The sequence is that of Collagen-like protein 1 from Acanthamoeba polyphaga mimivirus (APMV).